A 247-amino-acid chain; its full sequence is ATP synthase subunit C lysine N-methyltransferase (247 aa).

Residue methionine 1 is modified to N-acetylmethionine. The segment covering 1–12 (MERVGTPEEERQ) has biased composition (basic and acidic residues). Residues 1-25 (MERVGTPEEERQAGPVLPTSLESDS) are disordered. Residues 34 to 54 (LITGVVGGALLTVYAVATPFI) form a helical membrane-spanning segment. Positions 51-85 (TPFITPALRKVCLPFVPATSKQVENVVRMLRHRRG) are required for mitochondrial location. The interval 209 to 247 (QRGRGGRPNQEWVGQKNLSETAGLQASSSETRSKLLDVE) is disordered. Residues 224–238 (KNLSETAGLQASSSE) are compositionally biased toward polar residues.

This sequence belongs to the ANT/ATPSC lysine N-methyltransferase family. In terms of tissue distribution, ubiquitously expressed.

The protein localises to the mitochondrion membrane. It catalyses the reaction L-lysyl-[protein] + 3 S-adenosyl-L-methionine = N(6),N(6),N(6)-trimethyl-L-lysyl-[protein] + 3 S-adenosyl-L-homocysteine + 3 H(+). In terms of biological role, mitochondrial protein-lysine N-methyltransferase that trimethylates ATP synthase subunit C, ATP5MC1 and ATP5MC2. Trimethylation is required for proper incorporation of the C subunit into the ATP synthase complex and mitochondrial respiration. Promotes chronic pain. Involved in persistent inflammatory and neuropathic pain: methyltransferase activity in the mitochondria of sensory neurons promotes chronic pain via a pathway that depends on the production of reactive oxygen species (ROS) and on the engagement of spinal cord microglia. The protein is ATP synthase subunit C lysine N-methyltransferase of Mus musculus (Mouse).